The primary structure comprises 435 residues: GTPase Der (435 aa).

EngA-type G domains lie at proline 4–lysine 167 and isoleucine 175–asparagine 350. Residues glycine 10–serine 17, aspartate 57–isoleucine 61, asparagine 119–aspartate 122, glycine 181–serine 188, aspartate 228–isoleucine 232, and asparagine 293–aspartate 296 each bind GTP. The 85-residue stretch at glutamine 351–lysine 435 folds into the KH-like domain.

This sequence belongs to the TRAFAC class TrmE-Era-EngA-EngB-Septin-like GTPase superfamily. EngA (Der) GTPase family. In terms of assembly, associates with the 50S ribosomal subunit.

GTPase that plays an essential role in the late steps of ribosome biogenesis. This Lactobacillus helveticus (strain DPC 4571) protein is GTPase Der.